A 172-amino-acid chain; its full sequence is MYDGQPIFNIIDSSNLQDRRELKLVLIHTENAYRSSAQRSLIASQRSWINFIINTDVPIDPAKDEVVKCSRKVACCPDPTDIPFDILNVSLLYVYCSFQEMRRYAQQRFYDGVSDGGAVISTVPPYAEGITKQTMRLWQKKVWQNTSKETHDLDAYIALLPNLRFKIQISHI.

This is an uncharacterized protein from Agrobacterium tumefaciens (strain Ach5).